Consider the following 155-residue polypeptide: 6,7-dimethyl-8-ribityllumazine synthase (155 aa).

Residues phenylalanine 23, 57 to 59 (AFE), and 81 to 83 (AVI) contribute to the 5-amino-6-(D-ribitylamino)uracil site. 86 to 87 (ST) contributes to the (2S)-2-hydroxy-3-oxobutyl phosphate binding site. The active-site Proton donor is the histidine 89. Residue phenylalanine 114 coordinates 5-amino-6-(D-ribitylamino)uracil. Arginine 128 contacts (2S)-2-hydroxy-3-oxobutyl phosphate.

This sequence belongs to the DMRL synthase family.

It catalyses the reaction (2S)-2-hydroxy-3-oxobutyl phosphate + 5-amino-6-(D-ribitylamino)uracil = 6,7-dimethyl-8-(1-D-ribityl)lumazine + phosphate + 2 H2O + H(+). It functions in the pathway cofactor biosynthesis; riboflavin biosynthesis; riboflavin from 2-hydroxy-3-oxobutyl phosphate and 5-amino-6-(D-ribitylamino)uracil: step 1/2. Catalyzes the formation of 6,7-dimethyl-8-ribityllumazine by condensation of 5-amino-6-(D-ribitylamino)uracil with 3,4-dihydroxy-2-butanone 4-phosphate. This is the penultimate step in the biosynthesis of riboflavin. The sequence is that of 6,7-dimethyl-8-ribityllumazine synthase from Geobacter sp. (strain M21).